The sequence spans 1150 residues: Voltage-dependent calcium channel subunit alpha-2/delta-2 (1150 aa).

An N-terminal signal peptide occupies residues 1–18; sequence MAVPARTCGASRPGPART. The segment at 1–41 is disordered; sequence MAVPARTCGASRPGPARTARPWPGCGPHPGPGTRRPTSGPP. The Extracellular portion of the chain corresponds to 19–1113; it reads ARPWPGCGPH…TEDTSDCGRG (1095 aa). The region spanning 291 to 469 is the VWFA domain; the sequence is DMVIIVDVSG…INTQEYLDVL (179 aa). A divalent metal cation contacts are provided by aspartate 297, serine 299, and serine 301. The MIDAS-like motif motif lies at 297–301; the sequence is DVSGS. Asparagine 386, asparagine 418, asparagine 507, asparagine 540, asparagine 624, and asparagine 861 each carry an N-linked (GlcNAc...) asparagine glycan. A disulfide bond links cysteine 443 and cysteine 1098. One can recognise a Cache domain in the interval 485–574; the sequence is WTNVYEDALG…KPQTTNFREP (90 aa). The helical transmembrane segment at 1114–1134 threads the bilayer; sequence ASFPPSLGVLVSLQLLLLLGL. Over 1135–1150 the chain is Cytoplasmic; sequence PPRPQPQVLVHASRRL.

This sequence belongs to the calcium channel subunit alpha-2/delta family. As to quaternary structure, dimer formed of alpha-2-2 and delta-2 chains; disulfide-linked. Voltage-dependent calcium channels are multisubunit complexes, consisting of alpha-1 (CACNA1), alpha-2 (CACNA2D), beta (CACNB) and delta (CACNA2D) subunits in a 1:1:1:1 ratio. In terms of processing, may be proteolytically processed into subunits alpha-2-2 and delta-2 that are disulfide-linked. It is however unclear whether such cleavage really takes place in vivo and has a functional role. As to expression, predominantly present in cerebellar cortex. Present in various lung tumor cell lines, while it is absent in normal lung (at protein level). Highly expressed in heart, lung, testis, pancreas and skeletal muscle. Also expressed in kidney, liver, placenta and brain.

The protein resides in the membrane. The alpha-2/delta subunit of voltage-dependent calcium channels regulates calcium current density and activation/inactivation kinetics of the calcium channel. Acts as a regulatory subunit for P/Q-type calcium channel (CACNA1A), N-type (CACNA1B), L-type (CACNA1C OR CACNA1D) and possibly T-type (CACNA1G). Overexpression induces apoptosis. The protein is Voltage-dependent calcium channel subunit alpha-2/delta-2 (CACNA2D2) of Homo sapiens (Human).